A 425-amino-acid polypeptide reads, in one-letter code: Histidine--tRNA ligase (425 aa).

This sequence belongs to the class-II aminoacyl-tRNA synthetase family. In terms of assembly, homodimer.

Its subcellular location is the cytoplasm. The enzyme catalyses tRNA(His) + L-histidine + ATP = L-histidyl-tRNA(His) + AMP + diphosphate + H(+). In Buchnera aphidicola subsp. Baizongia pistaciae (strain Bp), this protein is Histidine--tRNA ligase.